The sequence spans 43 residues: Iota-conotoxin-like S11.2 (43 aa).

Cystine bridges form between cysteine 2–cysteine 16, cysteine 9–cysteine 19, cysteine 15–cysteine 24, and cysteine 18–cysteine 35. Methionine 41 is modified (D-methionine). Position 43 (arginine 43) is a propeptide, removed by a carboxypeptidase.

The protein belongs to the conotoxin I1 superfamily. Expressed by the venom duct.

Its subcellular location is the secreted. Iota-conotoxins bind to voltage-gated sodium channels (Nav) and act as agonists by shifting the voltage-dependence of activation to more hyperpolarized levels. Produces general excitatory symptoms. The protein is Iota-conotoxin-like S11.2 of Conus striatus (Striated cone).